Consider the following 81-residue polypeptide: Large ribosomal subunit protein bL27 (81 aa).

Residues 1-11 (MATSKSGGSSK) show a composition bias toward polar residues. Residues 1–23 (MATSKSGGSSKNGRDSISKRLGV) are disordered.

The protein belongs to the bacterial ribosomal protein bL27 family.

In Borrelia garinii subsp. bavariensis (strain ATCC BAA-2496 / DSM 23469 / PBi) (Borreliella bavariensis), this protein is Large ribosomal subunit protein bL27.